A 181-amino-acid chain; its full sequence is CASP-like protein 1F2 (181 aa).

Residues 1–18 are Cytoplasmic-facing; that stretch reads MADIETKSSQNQPLKTQN. Residues 19-39 traverse the membrane as a helical segment; sequence IFIGAQIFLRIVVIAASFAST. The Extracellular portion of the chain corresponds to 40–70; sequence WLMLTNKQTIDIGGFVLDANYSYSPEFKFLS. N-linked (GlcNAc...) asparagine glycosylation occurs at Asn59. Residues 71–91 traverse the membrane as a helical segment; the sequence is YANIVVGAFSFVSLLFLVLVG. Topologically, residues 92–100 are cytoplasmic; it reads RRSSNPTYY. The chain crosses the membrane as a helical span at residues 101–121; that stretch reads FILFLHDLALMSLVLGGCAAA. The Extracellular portion of the chain corresponds to 122–150; the sequence is TVIGSLGKYGNSHTGWMQICDHFGKFCKR. Residues 151-171 form a helical membrane-spanning segment; it reads ATTSVAFSYFSLVCLLILTIT. The Cytoplasmic segment spans residues 172–181; it reads SASKSRQIQV.

It belongs to the Casparian strip membrane proteins (CASP) family. In terms of assembly, homodimer and heterodimers.

Its subcellular location is the cell membrane. In Populus trichocarpa (Western balsam poplar), this protein is CASP-like protein 1F2.